Here is an 800-residue protein sequence, read N- to C-terminus: Protein translocase subunit SecA (800 aa).

ATP is bound by residues Q85, 103–107 (GEGKT), and D504.

Belongs to the SecA family. As to quaternary structure, monomer and homodimer. Part of the essential Sec protein translocation apparatus which comprises SecA, SecYEG and auxiliary proteins SecDF. Other proteins may also be involved.

Its subcellular location is the cell membrane. It localises to the cytoplasm. The catalysed reaction is ATP + H2O + cellular proteinSide 1 = ADP + phosphate + cellular proteinSide 2.. Functionally, part of the Sec protein translocase complex. Interacts with the SecYEG preprotein conducting channel. Has a central role in coupling the hydrolysis of ATP to the transfer of proteins into and across the cell membrane, serving as an ATP-driven molecular motor driving the stepwise translocation of polypeptide chains across the membrane. This chain is Protein translocase subunit SecA, found in Lactobacillus delbrueckii subsp. bulgaricus (strain ATCC 11842 / DSM 20081 / BCRC 10696 / JCM 1002 / NBRC 13953 / NCIMB 11778 / NCTC 12712 / WDCM 00102 / Lb 14).